Reading from the N-terminus, the 205-residue chain is Putative STAG3-like protein 1 (205 aa).

One can recognise an SCD domain in the interval 10–95 (PKVTCRDVLP…GRFKDWMVSM (86 aa)).

The protein belongs to the SCC3 family.

The protein resides in the nucleus. This is Putative STAG3-like protein 1 (STAG3L1) from Homo sapiens (Human).